We begin with the raw amino-acid sequence, 289 residues long: ATP synthase subunit a (289 aa).

7 helical membrane-spanning segments follow: residues 41-61 (KATALTIFAALFVGVIFWLGF), 101-121 (YLLVLFSFVLVSNVLAIIPAA), 129-149 (IAVPMVLAVVTWVMFIYAGIK), 166-186 (TAPLAIRLLLGPIEILSTLIV), 189-209 (FTLAIRLFANMFAGHLLLLVF), 222-242 (FVFGVASLLVAIVLTAFELVI), and 244-264 (ALQAYIITILTAAYIGGAMAH).

It belongs to the ATPase A chain family. In terms of assembly, F-type ATPases have 2 components, CF(1) - the catalytic core - and CF(0) - the membrane proton channel. CF(1) has five subunits: alpha(3), beta(3), gamma(1), delta(1), epsilon(1). CF(0) has three main subunits: a(1), b(2) and c(9-12). The alpha and beta chains form an alternating ring which encloses part of the gamma chain. CF(1) is attached to CF(0) by a central stalk formed by the gamma and epsilon chains, while a peripheral stalk is formed by the delta and b chains.

Its subcellular location is the cell membrane. Key component of the proton channel; it plays a direct role in the translocation of protons across the membrane. The chain is ATP synthase subunit a from Frankia alni (strain DSM 45986 / CECT 9034 / ACN14a).